A 243-amino-acid chain; its full sequence is 1-(5-phosphoribosyl)-5-[(5-phosphoribosylamino)methylideneamino] imidazole-4-carboxamide isomerase (243 aa).

Catalysis depends on Asp-8, which acts as the Proton acceptor. Asp-130 acts as the Proton donor in catalysis.

This sequence belongs to the HisA/HisF family.

Its subcellular location is the cytoplasm. It carries out the reaction 1-(5-phospho-beta-D-ribosyl)-5-[(5-phospho-beta-D-ribosylamino)methylideneamino]imidazole-4-carboxamide = 5-[(5-phospho-1-deoxy-D-ribulos-1-ylimino)methylamino]-1-(5-phospho-beta-D-ribosyl)imidazole-4-carboxamide. The protein operates within amino-acid biosynthesis; L-histidine biosynthesis; L-histidine from 5-phospho-alpha-D-ribose 1-diphosphate: step 4/9. In Acinetobacter baumannii (strain AB307-0294), this protein is 1-(5-phosphoribosyl)-5-[(5-phosphoribosylamino)methylideneamino] imidazole-4-carboxamide isomerase.